Here is a 297-residue protein sequence, read N- to C-terminus: 3-mercaptopyruvate sulfurtransferase (297 aa).

At Ala2 the chain carries N-acetylalanine. A phosphoserine mark is found at Ser3, Trp15, Pro23, and Ser35. In terms of domain architecture, Rhodanese 1 spans 25 to 144 (AGQPLQLLDA…WLRQNLPLSS (120 aa)). Lys40 is subject to N6-acetyllysine; alternate. At Lys40 the chain carries N6-succinyllysine; alternate. The hinge stretch occupies residues 145–160 (GKSQPAPAEFRAQLDP). N6-succinyllysine is present on residues Lys146 and Lys164. Residues 174–288 (ESRRFQVVDS…WYMRARPEDV (115 aa)) enclose the Rhodanese 2 domain. Arg188 serves as a coordination point for substrate. The active-site Cysteine persulfide intermediate is Cys248.

Monomer (active form). Homodimer; disulfide-linked (inactive form).

Its subcellular location is the cytoplasm. It localises to the mitochondrion. It is found in the synapse. The protein resides in the synaptosome. It catalyses the reaction 2-oxo-3-sulfanylpropanoate + [thioredoxin]-dithiol = [thioredoxin]-disulfide + hydrogen sulfide + pyruvate + H(+). With respect to regulation, by oxidative stress, and thioredoxin. Under oxidative stress conditions, the catalytic cysteine site is converted to a sulfenate which inhibits the MPST enzyme activity. Reduced thioredoxin cleaves an intersubunit disulfide bond to turn on the redox switch and reactivate the enzyme. Its function is as follows. Transfer of a sulfur ion to cyanide or to other thiol compounds. Also has weak rhodanese activity. Detoxifies cyanide and is required for thiosulfate biosynthesis. Acts as an antioxidant. In combination with cysteine aminotransferase (CAT), contributes to the catabolism of cysteine and is an important producer of hydrogen sulfide in the brain, retina and vascular endothelial cells. Hydrogen sulfide H(2)S is an important synaptic modulator, signaling molecule, smooth muscle contractor and neuroprotectant. Its production by the 3MST/CAT pathway is regulated by calcium ions. In Homo sapiens (Human), this protein is 3-mercaptopyruvate sulfurtransferase (MPST).